A 235-amino-acid chain; its full sequence is Ribonuclease PH (235 aa).

Phosphate-binding positions include arginine 86 and 124-126; that span reads GTR.

This sequence belongs to the RNase PH family. In terms of assembly, homohexameric ring arranged as a trimer of dimers.

The enzyme catalyses tRNA(n+1) + phosphate = tRNA(n) + a ribonucleoside 5'-diphosphate. Its function is as follows. Phosphorolytic 3'-5' exoribonuclease that plays an important role in tRNA 3'-end maturation. Removes nucleotide residues following the 3'-CCA terminus of tRNAs; can also add nucleotides to the ends of RNA molecules by using nucleoside diphosphates as substrates, but this may not be physiologically important. Probably plays a role in initiation of 16S rRNA degradation (leading to ribosome degradation) during starvation. The chain is Ribonuclease PH from Legionella pneumophila (strain Corby).